The sequence spans 714 residues: MHQQAATSSRCQGWSPRYQGWSPRFQGWSPRFHGWNPRFRGWNPHCRGWSPCFQGWSPRCQTFPPKINRISSNYPTCDGQEQPAYFTDNFCKPCGVVLQHESERISHFESEIHAQNVKFFFQMHGEQSEVPGRKVNMHAGNSQVCSSGEVNRNNFTDLHNMSFDSLAAAPSHYVGKSHSPTQNQSLEEHDQVSPSTCSPKMDEPNTTPAPPPFLKSVIVKPPPAYRMRTYVCHICSITFTSLHMFRSHMQGTEHQIKRAQHLWTHWQCTQLLESHVINQVKNSKKMQESCQAECGDDIKMKKSRELEPKGHFREMEDNYMEAQAHEYREMVDSRPRHKMLEQTLPLENFWAHPGPYNDSRALEEQLPHNLPAESKTYDSFQDELEDYIKGQKARGLDPNTSFRRMSESYRYRDQRYRERVDSEHRQRPCEERFSFEAPQTYQQEYSASPVEGQSPHWLPSHSKRRNDDFQNEFDDYNKVQESRESEPKTSFRRMDSSFETHNYEEMVDRRSSHTMFEEGLPCETFQTYTDPYSSAQAVENTLPHCLPAYENQPSLDAESHYQLTTEEFSEMPASLSLSQQEDNPSSYNVDYDIYKHLPSNDNASAHETSHRRRRQKRKRHLEEGKERPEKEQSKHKRKRSYQDKDLDKDKLIKQSKREEDKAGVSSEKTKHRRKKRKHETSSEKEERKHKKEKKKSVEERTEEEILWDESILGF.

The Matrin-type 1 zinc-finger motif lies at 89 to 119 (NFCKPCGVVLQHESERISHFESEIHAQNVKF). The tract at residues 172–214 (HYVGKSHSPTQNQSLEEHDQVSPSTCSPKMDEPNTTPAPPPFL) is disordered. Residues 230 to 254 (YVCHICSITFTSLHMFRSHMQGTEH) form a Matrin-type 2 zinc finger. Residues 417-434 (RERVDSEHRQRPCEERFS) show a composition bias toward basic and acidic residues. Disordered regions lie at residues 417–469 (RERV…NDDF) and 571–714 (MPAS…ILGF). 2 stretches are compositionally biased toward polar residues: residues 437 to 446 (APQTYQQEYS) and 575 to 588 (LSLS…SSYN). The span at 609–619 (SHRRRRQKRKR) shows a compositional bias: basic residues. 2 stretches are compositionally biased toward basic and acidic residues: residues 620–632 (HLEE…EKEQ) and 640–662 (SYQD…EDKA). Basic residues predominate over residues 669–678 (TKHRRKKRKH).

It localises to the nucleus. The sequence is that of Zinc finger matrin-type protein 1 (Zmat1) from Mus musculus (Mouse).